Consider the following 141-residue polypeptide: Hemoglobin subunit alpha (141 aa).

Positions 1–141 (VLSGEDKNNI…VSTVLTSKYR (141 aa)) constitute a Globin domain. S3 carries the post-translational modification Phosphoserine. An N6-succinyllysine mark is found at K7 and K11. Residue K16 is modified to N6-acetyllysine; alternate. Residue K16 is modified to N6-succinyllysine; alternate. Residue Y24 is modified to Phosphotyrosine. K40 carries the post-translational modification N6-succinyllysine. S49 bears the Phosphoserine mark. H58 contacts O2. A heme b-binding site is contributed by H87. S102 carries the phosphoserine modification. Residue T108 is modified to Phosphothreonine. S124 and S131 each carry phosphoserine. Residues T134 and T137 each carry the phosphothreonine modification. Position 138 is a phosphoserine (S138).

This sequence belongs to the globin family. In terms of assembly, heterotetramer of two alpha chains and two beta chains. As to expression, red blood cells.

Functionally, involved in oxygen transport from the lung to the various peripheral tissues. Hemopressin acts as an antagonist peptide of the cannabinoid receptor CNR1. Hemopressin-binding efficiently blocks cannabinoid receptor CNR1 and subsequent signaling. This Ondatra zibethicus (Muskrat) protein is Hemoglobin subunit alpha (HBA).